Here is an 89-residue protein sequence, read N- to C-terminus: Small ribosomal subunit protein uS15 (89 aa).

It belongs to the universal ribosomal protein uS15 family. As to quaternary structure, part of the 30S ribosomal subunit. Forms a bridge to the 50S subunit in the 70S ribosome, contacting the 23S rRNA.

In terms of biological role, one of the primary rRNA binding proteins, it binds directly to 16S rRNA where it helps nucleate assembly of the platform of the 30S subunit by binding and bridging several RNA helices of the 16S rRNA. Functionally, forms an intersubunit bridge (bridge B4) with the 23S rRNA of the 50S subunit in the ribosome. The polypeptide is Small ribosomal subunit protein uS15 (Buchnera aphidicola subsp. Acyrthosiphon pisum (strain 5A)).